The following is a 668-amino-acid chain: ATP-dependent RNA helicase MSS116, mitochondrial (668 aa).

Residues 1 to 38 (MLKQLSRSLGIRSSPIVANLIRSKQVCTRGFHISLVKQ) constitute a mitochondrion transit peptide. Positions 87–115 (DFKGKGYIHDSIINSLHKNDFKELTPIQQ) match the Q motif motif. Residues 119–300 (VPIFNTEKGL…KKHIHPEYEF (182 aa)) form the Helicase ATP-binding domain. 132 to 139 (AKTGTGKT) is a binding site for ATP. A DEAD box motif is present at residues 242–245 (DEAD). A Helicase C-terminal domain is found at 332–501 (SLSELHGIMK…NIIDQIESPL (170 aa)). The segment at 585–668 (YSDFSRSGMS…EHRRIRDHDE (84 aa)) is disordered. Positions 586–597 (SDFSRSGMSQRP) are enriched in polar residues. The segment covering 609–636 (NGRGKYGNNRNNDWSYQNKNRYNNNNNR) has biased composition (low complexity). Positions 637-668 (QTERSYDSDRKSHNDWKYEKKFEHRRIRDHDE) are enriched in basic and acidic residues.

Belongs to the DEAD box helicase family. DDX18/HAS1 subfamily.

It is found in the mitochondrion matrix. It carries out the reaction ATP + H2O = ADP + phosphate + H(+). Its function is as follows. ATP-dependent RNA helicase required for mitochondrial splicing of group I and II introns. Also required for efficient mitochondrial translation. This Candida albicans (strain SC5314 / ATCC MYA-2876) (Yeast) protein is ATP-dependent RNA helicase MSS116, mitochondrial (MSS116).